The chain runs to 286 residues: Probable 4-deoxy-4-formamido-L-arabinose-phosphoundecaprenol deformylase ArnD (286 aa).

The 248-residue stretch at 1-248 folds into the NodB homology domain; that stretch reads MGTKLGVPNL…IAINEGINFC (248 aa).

The protein belongs to the polysaccharide deacetylase family. ArnD deformylase subfamily.

The catalysed reaction is 4-deoxy-4-formamido-alpha-L-arabinopyranosyl di-trans,octa-cis-undecaprenyl phosphate + H2O = 4-amino-4-deoxy-alpha-L-arabinopyranosyl di-trans,octa-cis-undecaprenyl phosphate + formate. The protein operates within glycolipid biosynthesis; 4-amino-4-deoxy-alpha-L-arabinose undecaprenyl phosphate biosynthesis; 4-amino-4-deoxy-alpha-L-arabinose undecaprenyl phosphate from UDP-4-deoxy-4-formamido-beta-L-arabinose and undecaprenyl phosphate: step 2/2. It functions in the pathway bacterial outer membrane biogenesis; lipopolysaccharide biosynthesis. In terms of biological role, catalyzes the deformylation of 4-deoxy-4-formamido-L-arabinose-phosphoundecaprenol to 4-amino-4-deoxy-L-arabinose-phosphoundecaprenol. The modified arabinose is attached to lipid A and is required for resistance to polymyxin and cationic antimicrobial peptides. This Wigglesworthia glossinidia brevipalpis protein is Probable 4-deoxy-4-formamido-L-arabinose-phosphoundecaprenol deformylase ArnD.